A 171-amino-acid polypeptide reads, in one-letter code: ATP synthase subunit b (171 aa).

Residues Leu-26–Leu-48 traverse the membrane as a helical segment.

The protein belongs to the ATPase B chain family. F-type ATPases have 2 components, F(1) - the catalytic core - and F(0) - the membrane proton channel. F(1) has five subunits: alpha(3), beta(3), gamma(1), delta(1), epsilon(1). F(0) has four main subunits: a(1), b(1), b'(1) and c(10-14). The alpha and beta chains form an alternating ring which encloses part of the gamma chain. F(1) is attached to F(0) by a central stalk formed by the gamma and epsilon chains, while a peripheral stalk is formed by the delta, b and b' chains.

The protein localises to the cellular thylakoid membrane. F(1)F(0) ATP synthase produces ATP from ADP in the presence of a proton or sodium gradient. F-type ATPases consist of two structural domains, F(1) containing the extramembraneous catalytic core and F(0) containing the membrane proton channel, linked together by a central stalk and a peripheral stalk. During catalysis, ATP synthesis in the catalytic domain of F(1) is coupled via a rotary mechanism of the central stalk subunits to proton translocation. Functionally, component of the F(0) channel, it forms part of the peripheral stalk, linking F(1) to F(0). This chain is ATP synthase subunit b, found in Synechococcus elongatus (strain ATCC 33912 / PCC 7942 / FACHB-805) (Anacystis nidulans R2).